The sequence spans 132 residues: Antiholin (132 aa).

The Periplasmic segment spans residues 1–16 (MMNMIEWTKHVLESDD). Cytoplasmic-facing segments span residues 1 to 61 (MMNM…ILIK) and 39 to 58 (VIARINPKEKFSSFKMKTGI). The helical transmembrane segment at 17–38 (TKLIYWLTLLMVCMIVDTILGI) threads the bilayer. A helical membrane pass occupies residues 62–80 (VSEMIIALLAVPFALPFPA). Over 81-85 (GLPLL) the chain is Periplasmic. Residues 86-107 (YTVYTALCVSEMYSIFGHLRVV) form a helical membrane-spanning segment. The Cytoplasmic segment spans residues 108–132 (DDKSNFLSIIEGFFKQTYRKDKGDK).

The protein belongs to the bacteriophage holin family. phi29likevirus holin subfamily. In terms of assembly, homomultimer. Interacts with isoform Antiholin; this interaction blocks the holin homomultimerization and delays host cell lysis.

It localises to the host cell inner membrane. Functionally, accumulates harmlessly in the cytoplasmic membrane until it reaches a critical concentration that triggers the formation of micron-scale pores (holes) causing host cell membrane disruption and endolysin escape into the periplasmic space. Determines the precise timing of host cell lysis. Participates with the endolysin and spanin proteins in the sequential events which lead to the programmed host cell lysis releasing the mature viral particles from the host cell. In terms of biological role, counteracts the aggregation of the holin molecules and thus of pore formation. The polypeptide is Antiholin (14) (Bacillus phage B103 (Bacteriophage B103)).